An 82-amino-acid polypeptide reads, in one-letter code: Putative membrane protein insertion efficiency factor (82 aa).

The interval 63 to 82 is disordered; the sequence is PGGHDPVPESTILSKEKSVK.

This sequence belongs to the UPF0161 family.

The protein localises to the cell inner membrane. In terms of biological role, could be involved in insertion of integral membrane proteins into the membrane. The polypeptide is Putative membrane protein insertion efficiency factor (Protochlamydia amoebophila (strain UWE25)).